A 224-amino-acid chain; its full sequence is Ribose-5-phosphate isomerase A (224 aa).

Substrate-binding positions include 34–37 (TGST), 87–90 (DGAD), and 100–103 (KGGG). E109 functions as the Proton acceptor in the catalytic mechanism. Residue K127 coordinates substrate.

This sequence belongs to the ribose 5-phosphate isomerase family. Homodimer.

The catalysed reaction is aldehydo-D-ribose 5-phosphate = D-ribulose 5-phosphate. It participates in carbohydrate degradation; pentose phosphate pathway; D-ribose 5-phosphate from D-ribulose 5-phosphate (non-oxidative stage): step 1/1. In terms of biological role, catalyzes the reversible conversion of ribose-5-phosphate to ribulose 5-phosphate. In Francisella tularensis subsp. tularensis (strain FSC 198), this protein is Ribose-5-phosphate isomerase A.